Consider the following 224-residue polypeptide: uncharacterized protein (224 aa).

4 helical membrane-spanning segments follow: residues 39–59, 70–90, 103–123, and 139–159; these read LICL…FYSI, YLSL…ILFA, VFVF…IGAI, and MHIG…FLIT.

It localises to the membrane. This is an uncharacterized protein from Dictyostelium discoideum (Social amoeba).